The chain runs to 55 residues: Transcriptional regulator CdrS (55 aa).

It belongs to the CdrS family.

It localises to the cytoplasm. In terms of biological role, transcriptional regulator which plays a central role in the regulation of cell division. Activates the expression of the gene encoding the cell division protein FtsZ2, and of other genes encoding proteins predicted to function in critical aspects of cell division. Required for normal cell division but not for cell elongation. May act during the transition from stasis to growth. The CdrSL-FtsZ2 transcriptional network might coordinate cell division timing with cell growth. The chain is Transcriptional regulator CdrS from Halobacterium salinarum (strain ATCC 700922 / JCM 11081 / NRC-1) (Halobacterium halobium).